Here is a 476-residue protein sequence, read N- to C-terminus: Chromosomal replication initiator protein DnaA (476 aa).

Residues 1 to 73 (MTNSEQERWS…LSAWQAEMPE (73 aa)) form a domain I, interacts with DnaA modulators region. The segment at 73–132 (EVHRIDLSVRTAMRCATPAKEAPAAVEARRPERSDAKPVSDARAPVMTPVAASHDALGGS) is domain II. The segment at 92-115 (KEAPAAVEARRPERSDAKPVSDAR) is disordered. The span at 99 to 112 (EARRPERSDAKPVS) shows a compositional bias: basic and acidic residues. A domain III, AAA+ region region spans residues 133–355 (PLDPRLTFAS…GAINRLLAHS (223 aa)). Gly180, Gly182, Lys183, and Thr184 together coordinate ATP. The segment at 356-476 (KLNNQPVTLD…VESLKRQLQD (121 aa)) is domain IV, binds dsDNA.

The protein belongs to the DnaA family. Oligomerizes as a right-handed, spiral filament on DNA at oriC.

The protein localises to the cytoplasm. Functionally, plays an essential role in the initiation and regulation of chromosomal replication. ATP-DnaA binds to the origin of replication (oriC) to initiate formation of the DNA replication initiation complex once per cell cycle. Binds the DnaA box (a 9 base pair repeat at the origin) and separates the double-stranded (ds)DNA. Forms a right-handed helical filament on oriC DNA; dsDNA binds to the exterior of the filament while single-stranded (ss)DNA is stabiized in the filament's interior. The ATP-DnaA-oriC complex binds and stabilizes one strand of the AT-rich DNA unwinding element (DUE), permitting loading of DNA polymerase. After initiation quickly degrades to an ADP-DnaA complex that is not apt for DNA replication. Binds acidic phospholipids. This is Chromosomal replication initiator protein DnaA from Bradyrhizobium sp. (strain ORS 278).